The sequence spans 341 residues: UDP-3-O-acylglucosamine N-acyltransferase (341 aa).

The active-site Proton acceptor is H241.

It belongs to the transferase hexapeptide repeat family. LpxD subfamily. Homotrimer.

It carries out the reaction a UDP-3-O-[(3R)-3-hydroxyacyl]-alpha-D-glucosamine + a (3R)-hydroxyacyl-[ACP] = a UDP-2-N,3-O-bis[(3R)-3-hydroxyacyl]-alpha-D-glucosamine + holo-[ACP] + H(+). Its pathway is bacterial outer membrane biogenesis; LPS lipid A biosynthesis. In terms of biological role, catalyzes the N-acylation of UDP-3-O-acylglucosamine using 3-hydroxyacyl-ACP as the acyl donor. Is involved in the biosynthesis of lipid A, a phosphorylated glycolipid that anchors the lipopolysaccharide to the outer membrane of the cell. The polypeptide is UDP-3-O-acylglucosamine N-acyltransferase (Christiangramia forsetii (strain DSM 17595 / CGMCC 1.15422 / KT0803) (Gramella forsetii)).